We begin with the raw amino-acid sequence, 287 residues long: Proteasome assembly chaperone 1 (287 aa).

The segment at 1–32 is disordered; the sequence is MATFFGEVQSVFSRAVDEDDEEEEGEEEEEDR. Residues 17-32 show a composition bias toward acidic residues; sequence DEDDEEEEGEEEEEDR.

Belongs to the PSMG1 family. In terms of assembly, forms a heterodimer with psmg2. Degraded by the proteasome upon completion of 20S proteasome maturation.

The protein resides in the cytoplasm. It is found in the endoplasmic reticulum. Chaperone protein which promotes assembly of the 20S proteasome as part of a heterodimer with psmg2. This is Proteasome assembly chaperone 1 from Xenopus tropicalis (Western clawed frog).